We begin with the raw amino-acid sequence, 110 residues long: Large ribosomal subunit protein uL22 (110 aa).

Belongs to the universal ribosomal protein uL22 family. In terms of assembly, part of the 50S ribosomal subunit.

Its function is as follows. This protein binds specifically to 23S rRNA; its binding is stimulated by other ribosomal proteins, e.g. L4, L17, and L20. It is important during the early stages of 50S assembly. It makes multiple contacts with different domains of the 23S rRNA in the assembled 50S subunit and ribosome. In terms of biological role, the globular domain of the protein is located near the polypeptide exit tunnel on the outside of the subunit, while an extended beta-hairpin is found that lines the wall of the exit tunnel in the center of the 70S ribosome. This is Large ribosomal subunit protein uL22 from Mannheimia succiniciproducens (strain KCTC 0769BP / MBEL55E).